Here is a 434-residue protein sequence, read N- to C-terminus: AT-rich interactive domain-containing protein 5 (434 aa).

Residues 1-120 (MMADTEMQEQ…SSPHVPEESV (120 aa)) are disordered. Basic and acidic residues-rich tracts occupy residues 25–37 (ELEKDLNSIERPK), 43–54 (DTTHTLDSDVHL), and 78–90 (RNGDVDQSEKKIT). The span at 92 to 102 (DGGQEETTLGE) shows a compositional bias: polar residues. The ARID domain maps to 142–233 (PQDQEAFIKE…ALLEYEKHLR (92 aa)). Residues 237–274 (ELNLPGSASLPSSGIEKEASSHQASGSGRTRRDAAARA) form a disordered region. One can recognise a sHSP domain in the interval 336 to 434 (AEVIDVGPPA…RLFVRVPFEQ (99 aa)).

Belongs to the small heat shock protein (HSP20) family.

Its subcellular location is the nucleus. This chain is AT-rich interactive domain-containing protein 5 (ARID5), found in Arabidopsis thaliana (Mouse-ear cress).